We begin with the raw amino-acid sequence, 257 residues long: MVKIGILGSTGRVGSLLIDDLQNDKDAKLSAVHVTSKLLKTLPQDTIVTNDIKVLFDSCDVIIDFSKPSGTEALLTEVIENGAKKPLVIATTGLNKHQQNLLLEASKLVPILYATNMSLGVAVLNKLVTLASKTLRDFDIEIVEQHHRHKIDAPSGTALTLAEHAASARDLNLDDVRISGRDGNIGARTKDEIAVMALRGGDIVGRHTVGLYNDGEFLELNHTATARNTFSKGAIKVAKWIVGKDAKLYSINDALGL.

NAD(+) is bound by residues 8–13 (GSTGRV), 90–92 (ATT), and 114–117 (ATNM). His146 serves as the catalytic Proton donor/acceptor. His147 provides a ligand contact to (S)-2,3,4,5-tetrahydrodipicolinate. The active-site Proton donor is the Lys150. A (S)-2,3,4,5-tetrahydrodipicolinate-binding site is contributed by 156-157 (GT).

It belongs to the DapB family.

It is found in the cytoplasm. It carries out the reaction (S)-2,3,4,5-tetrahydrodipicolinate + NAD(+) + H2O = (2S,4S)-4-hydroxy-2,3,4,5-tetrahydrodipicolinate + NADH + H(+). The enzyme catalyses (S)-2,3,4,5-tetrahydrodipicolinate + NADP(+) + H2O = (2S,4S)-4-hydroxy-2,3,4,5-tetrahydrodipicolinate + NADPH + H(+). Its pathway is amino-acid biosynthesis; L-lysine biosynthesis via DAP pathway; (S)-tetrahydrodipicolinate from L-aspartate: step 4/4. Functionally, catalyzes the conversion of 4-hydroxy-tetrahydrodipicolinate (HTPA) to tetrahydrodipicolinate. The chain is 4-hydroxy-tetrahydrodipicolinate reductase from Aliarcobacter butzleri (strain RM4018) (Arcobacter butzleri).